The primary structure comprises 271 residues: Serine O-acetyltransferase (271 aa).

Cysteine 112 acts as the Acyl-thioester intermediate in catalysis. Histidine 204 acts as the Proton acceptor in catalysis. The active site involves glutamate 206.

It belongs to the MetA family.

The catalysed reaction is L-serine + acetyl-CoA = O-acetyl-L-serine + CoA. Its pathway is amino-acid biosynthesis; L-cysteine biosynthesis; L-cysteine from L-serine: step 1/2. In terms of biological role, catalyzes the formation of O-acetylserine (OAS) from L-serine and acetyl-CoA. To a lesser extent, is also able to use succinyl-CoA and propionyl-CoA as acyl donors, but not butyryl-CoA. Does not acylate D-serine and L-homoserine. In Lacticaseibacillus casei (Lactobacillus casei), this protein is Serine O-acetyltransferase.